The following is a 436-amino-acid chain: sn-glycerol-3-phosphate-binding periplasmic protein UgpB (436 aa).

A signal peptide spans 1 to 26 (MTLKKLSYRLAAASALSFFVTSNAFA). The sn-glycerol 3-phosphate site is built by tyrosine 68, aspartate 92, serine 147, serine 274, glycine 308, tyrosine 347, and arginine 398.

This sequence belongs to the bacterial solute-binding protein 1 family. In terms of assembly, the complex is composed of two ATP-binding proteins (UgpC), two transmembrane proteins (UgpA and UgpE) and a solute-binding protein (UgpB).

The protein localises to the periplasm. Its function is as follows. Part of the ABC transporter complex UgpBAEC involved in sn-glycerol-3-phosphate (G3P) import. Binds G3P. The protein is sn-glycerol-3-phosphate-binding periplasmic protein UgpB (ugpB) of Agrobacterium fabrum (strain C58 / ATCC 33970) (Agrobacterium tumefaciens (strain C58)).